The chain runs to 842 residues: uncharacterized protein (842 aa).

2 disordered regions span residues 1–20 (MLHF…SPKE) and 142–209 (NSSS…TSSS). The region spanning 35–422 (TKDVTFRLVL…TAKSFHKCIL (388 aa)) is the uDENN FNIP1/2-type domain. A compositionally biased stretch (polar residues) spans 183-209 (ANLSSSSKNMKDSTLSSQKARSNTSSS). Residues 430-772 (APLIKPSVFS…CYEIHEFPSE (343 aa)) enclose the cDENN FNIP1/2-type domain. Residues serine 573 and serine 590 each carry the phosphoserine modification. Residues 777-842 (YAPFLLKEHH…KEVLRVCSHC (66 aa)) form the dDENN FNIP1/2-type domain.

It is found in the cytoplasm. This is an uncharacterized protein from Schizosaccharomyces pombe (strain 972 / ATCC 24843) (Fission yeast).